A 70-amino-acid polypeptide reads, in one-letter code: Small ribosomal subunit protein bS21C (70 aa).

It belongs to the bacterial ribosomal protein bS21 family.

The protein is Small ribosomal subunit protein bS21C of Burkholderia pseudomallei (strain 1710b).